The following is a 331-amino-acid chain: Glyceraldehyde-3-phosphate dehydrogenase 3 (331 aa).

Residues 11–12, D33, and E77 each bind NAD(+); that span reads RI. The residue at position 148 (S148) is a Phosphoserine. Residue 148–150 coordinates D-glyceraldehyde 3-phosphate; sequence SCT. The Nucleophile role is filled by C149. Position 177 is a phosphoserine (S177). T179 lines the D-glyceraldehyde 3-phosphate pocket. Position 200 is a phosphoserine (S200). D-glyceraldehyde 3-phosphate contacts are provided by residues 208–209 and R231; that span reads TG. N313 is an NAD(+) binding site.

Belongs to the glyceraldehyde-3-phosphate dehydrogenase family. As to quaternary structure, homotetramer.

The protein resides in the cytoplasm. It catalyses the reaction D-glyceraldehyde 3-phosphate + phosphate + NAD(+) = (2R)-3-phospho-glyceroyl phosphate + NADH + H(+). It participates in carbohydrate degradation; glycolysis; pyruvate from D-glyceraldehyde 3-phosphate: step 1/5. In Kluyveromyces marxianus (Yeast), this protein is Glyceraldehyde-3-phosphate dehydrogenase 3.